We begin with the raw amino-acid sequence, 507 residues long: ATP synthase subunit alpha (507 aa).

Residue 169–176 (GDRQTGKT) participates in ATP binding.

Belongs to the ATPase alpha/beta chains family. As to quaternary structure, F-type ATPases have 2 components, CF(1) - the catalytic core - and CF(0) - the membrane proton channel. CF(1) has five subunits: alpha(3), beta(3), gamma(1), delta(1), epsilon(1). CF(0) has three main subunits: a(1), b(2) and c(9-12). The alpha and beta chains form an alternating ring which encloses part of the gamma chain. CF(1) is attached to CF(0) by a central stalk formed by the gamma and epsilon chains, while a peripheral stalk is formed by the delta and b chains.

It localises to the cell membrane. It catalyses the reaction ATP + H2O + 4 H(+)(in) = ADP + phosphate + 5 H(+)(out). In terms of biological role, produces ATP from ADP in the presence of a proton gradient across the membrane. The alpha chain is a regulatory subunit. This Desulforudis audaxviator (strain MP104C) protein is ATP synthase subunit alpha.